A 228-amino-acid chain; its full sequence is UPF0758 protein RALTA_A2508 (228 aa).

Positions 102-224 (GFDSPDSVRS…IRSLAESCER (123 aa)) constitute an MPN domain. His173, His175, and Asp186 together coordinate Zn(2+). The JAMM motif signature appears at 173-186 (HNHPRGTTAPSQSD).

This sequence belongs to the UPF0758 family.

The protein is UPF0758 protein RALTA_A2508 of Cupriavidus taiwanensis (strain DSM 17343 / BCRC 17206 / CCUG 44338 / CIP 107171 / LMG 19424 / R1) (Ralstonia taiwanensis (strain LMG 19424)).